Consider the following 459-residue polypeptide: Alcohol acyl transferase 1 allele GSa (459 aa).

Active-site proton acceptor residues include His164 and Asn385.

The protein belongs to the plant acyltransferase family. Highly expressed in the cortex and skin of ripe fruit.

It carries out the reaction butan-1-ol + acetyl-CoA = butyl acetate + CoA. The catalysed reaction is butan-1-ol + butanoyl-CoA = butyl butanoate + CoA. It catalyses the reaction butan-1-ol + hexanoyl-CoA = butyl hexanoate + CoA. The enzyme catalyses hexan-1-ol + butanoyl-CoA = hexyl butanoate + CoA. It carries out the reaction hexan-1-ol + acetyl-CoA = hexyl acetate + CoA. The catalysed reaction is 2-methylbutan-1-ol + butanoyl-CoA = 2-methylbutyl butanoate + CoA. It catalyses the reaction ethanol + butanoyl-CoA = ethyl butanoate + CoA. The enzyme catalyses hexanoyl-CoA + ethanol = ethyl hexanoate + CoA. Its function is as follows. Involved in the biosynthesis of volatile esters which confer ripe apple fruit flavor. Alcohol acyl transferase that can use a wide range of alcohols as substrate, including 2-methylbutanol, hexanol and ethanol, to produce esters such as butyl butanoate, butyl hexanoate, hexyl butanoate, ethyl butanoate and ethyl hexanoate and, to some extent, 2-methylbutyl acetate (2MBA), butyl acetate, hexyl acetate and 2-methylbutyl butanoate (2MBB). In Malus domestica (Apple), this protein is Alcohol acyl transferase 1 allele GSa.